The following is a 486-amino-acid chain: Shugoshin-1 (486 aa).

Residues 71–154 adopt a coiled-coil conformation; that stretch reads IEVSRVELQK…QNRAKILEKK (84 aa). Disordered stretches follow at residues 137-163, 187-209, 222-251, 323-346, 382-403, and 418-467; these read MSKTSNNQQNRAKILEKKTRSSKCAPT, YTSCHEPPQDKTNKRCTNRRKSE, HSCRPHVEYNGSSHDDDPRKTRRRRSARLN, AGSSVAGGEAHKFDIEDPEPPRKS, PIQHEQKRKLSRRKSSRLDPGP, and TVAP…SRRA. Basic and acidic residues predominate over residues 331–346; the sequence is EAHKFDIEDPEPPRKS. The span at 387-396 shows a compositional bias: basic residues; that stretch reads QKRKLSRRKS. Polar residues predominate over residues 423-433; the sequence is APSSSNALIEQ.

Belongs to the shugoshin family. Highly expressed in roots. Expressed in panicles. Expressed at low levels in leaves.

The protein localises to the nucleus. It localises to the nucleolus. The protein resides in the chromosome. Its subcellular location is the centromere. Its function is as follows. Plays a central role in chromosome cohesion during meiosis I by preventing premature dissociation of cohesin complex from centromeres after prophase, when most of cohesin complex dissociates from chromosomes arms. Required for the timely assembly and maintenance of synaptonemal complex (SC) during early prophase I. Required for maintenance of centromeric cohesion before prophase II and correct segregation of chromatids during meiosis II. Has apparently no function in mitosis. This Oryza sativa subsp. japonica (Rice) protein is Shugoshin-1.